The sequence spans 141 residues: Metallothiol transferase FosB (141 aa).

The region spanning 5–120 is the VOC domain; the sequence is SINHLLFSVS…DGHKFEFHTG (116 aa). Mg(2+) is bound by residues His8, His67, and Glu116. Glu116 serves as the catalytic Proton donor/acceptor.

Belongs to the fosfomycin resistance protein family. FosB subfamily. Homodimer. Requires Mg(2+) as cofactor.

It localises to the cytoplasm. Functionally, metallothiol transferase which confers resistance to fosfomycin by catalyzing the addition of a thiol cofactor to fosfomycin. L-cysteine is probably the physiological thiol donor. This is Metallothiol transferase FosB from Lysinibacillus sphaericus (strain C3-41).